A 246-amino-acid polypeptide reads, in one-letter code: Sec-independent protein translocase protein TatB (246 aa).

The helical transmembrane segment at 1–21 threads the bilayer; the sequence is MFDIGWSELLVIAVVLIVVVG. Disordered stretches follow at residues 94 to 122, 179 to 204, and 225 to 246; these read SDLQ…APLV, SRSK…PKPT, and VADA…KDEA. Polar residues-rich tracts occupy residues 97–112 and 187–197; these read QKAT…TAAP and PETTVATNASE.

Belongs to the TatB family. As to quaternary structure, the Tat system comprises two distinct complexes: a TatABC complex, containing multiple copies of TatA, TatB and TatC subunits, and a separate TatA complex, containing only TatA subunits. Substrates initially bind to the TatABC complex, which probably triggers association of the separate TatA complex to form the active translocon.

It is found in the cell inner membrane. Its function is as follows. Part of the twin-arginine translocation (Tat) system that transports large folded proteins containing a characteristic twin-arginine motif in their signal peptide across membranes. Together with TatC, TatB is part of a receptor directly interacting with Tat signal peptides. TatB may form an oligomeric binding site that transiently accommodates folded Tat precursor proteins before their translocation. In Agrobacterium fabrum (strain C58 / ATCC 33970) (Agrobacterium tumefaciens (strain C58)), this protein is Sec-independent protein translocase protein TatB.